A 339-amino-acid polypeptide reads, in one-letter code: NADH-quinone oxidoreductase subunit H (339 aa).

9 helical membrane passes run 9 to 29 (IFPLIIIALKVVAITTPLILC), 50 to 70 (PNVVGPFGLLQPIADAVKLLF), 82 to 102 (ILFILAPMITFILSLIGWAVI), 115 to 135 (VGVLYILAISSLSVYGIIIAG), 161 to 181 (MGLVIITVLLTTGTLNLSEII), 187 to 207 (MPWWIDLMLLPMGVVFFISVL), 235 to 255 (MGFALFFLGEYANMILVSAMT), 275 to 295 (IPGFFWFVFKVGFLLFCFLWI), and 311 to 331 (GWKVFLPLTLFWVVLVSSVLV).

It belongs to the complex I subunit 1 family. NDH-1 is composed of 14 different subunits. Subunits NuoA, H, J, K, L, M, N constitute the membrane sector of the complex.

It localises to the cell inner membrane. The enzyme catalyses a quinone + NADH + 5 H(+)(in) = a quinol + NAD(+) + 4 H(+)(out). Its function is as follows. NDH-1 shuttles electrons from NADH, via FMN and iron-sulfur (Fe-S) centers, to quinones in the respiratory chain. The immediate electron acceptor for the enzyme in this species is believed to be ubiquinone. Couples the redox reaction to proton translocation (for every two electrons transferred, four hydrogen ions are translocated across the cytoplasmic membrane), and thus conserves the redox energy in a proton gradient. This subunit may bind ubiquinone. The protein is NADH-quinone oxidoreductase subunit H of Rickettsia peacockii (strain Rustic).